Reading from the N-terminus, the 217-residue chain is Proteasome subunit beta type-6-B like protein (217 aa).

Residues Met-1–Gly-16 constitute a propeptide, removed in mature form. Thr-17 serves as the catalytic Nucleophile.

It belongs to the peptidase T1B family. As to quaternary structure, the 26S proteasome consists of a 20S proteasome core and two 19S regulatory subunits. The 20S proteasome core is composed of 28 subunits that are arranged in four stacked rings, resulting in a barrel-shaped structure. The two end rings are each formed by seven alpha subunits, and the two central rings are each formed by seven beta subunits. The catalytic chamber with the active sites is on the inside of the barrel.

It localises to the cytoplasm. The protein localises to the nucleus. The catalysed reaction is Cleavage of peptide bonds with very broad specificity.. Its function is as follows. The proteasome is a multicatalytic proteinase complex which is characterized by its ability to cleave peptides with Arg, Phe, Tyr, Leu, and Glu adjacent to the leaving group at neutral or slightly basic pH. The proteasome has an ATP-dependent proteolytic activity. This subunit is involved in antigen processing to generate class I binding peptides. The polypeptide is Proteasome subunit beta type-6-B like protein (psmb6l-b) (Salmo salar (Atlantic salmon)).